The sequence spans 594 residues: (E)-beta-ocimene synthase TPS6FN (594 aa).

(2E)-geranyl diphosphate-binding residues include Arg-303, Asp-340, Asp-344, Arg-489, and Asn-492. Mg(2+) contacts are provided by Asp-340 and Asp-344. The short motif at 340 to 344 is the DDXXD motif element; that stretch reads DDIYD. 3 residues coordinate Mg(2+): Asn-492, Thr-496, and Glu-500.

This sequence belongs to the terpene synthase family. Tpsb subfamily. The cofactor is Mg(2+). Mn(2+) is required as a cofactor. Expressed in glandular trichomes two to four weeks after flowering onset.

The catalysed reaction is (2E)-geranyl diphosphate = (E)-beta-ocimene + diphosphate. The enzyme catalyses (2E)-geranyl diphosphate = (Z)-beta-ocimene + diphosphate. It functions in the pathway secondary metabolite biosynthesis; terpenoid biosynthesis. Functionally, involved in monoterpene (C10) olefins biosynthesis, constituants of cannabinoids and terpenoids-rich resins. Catalyzes mainly the conversion of (2E)-geranyl diphosphate to (E)-beta-ocimene, and also produces minor products such as (Z)-beta-ocimene. In Cannabis sativa (Hemp), this protein is (E)-beta-ocimene synthase TPS6FN.